The sequence spans 87 residues: uncharacterized protein (87 aa).

The chain crosses the membrane as a helical span at residues 42 to 62 (LADALYSAGSAAFTIAASLVA).

It belongs to the SPP1 holin family.

The protein localises to the membrane. This is an uncharacterized protein from Bacillus licheniformis.